The following is a 227-amino-acid chain: Probable maleylacetoacetate isomerase 2 (227 aa).

The GST N-terminal domain maps to 14–97; that stretch reads IQPILYSYWR…YLEETRPQRP (84 aa). Glutathione contacts are provided by residues 24 to 29, Gln-55, Val-69, 81 to 82, Gln-121, and 125 to 127; these read SSCSWR, ES, and NLI. Residues 102-222 form the GST C-terminal domain; that stretch reads DVHKRAKVRE…HPSNQPDCPP (121 aa).

Belongs to the GST superfamily. Zeta family. Requires glutathione as cofactor.

It localises to the cytoplasm. The catalysed reaction is 4-maleylacetoacetate = 4-fumarylacetoacetate. It catalyses the reaction RX + glutathione = an S-substituted glutathione + a halide anion + H(+). It functions in the pathway amino-acid degradation; L-phenylalanine degradation; acetoacetate and fumarate from L-phenylalanine: step 5/6. Catalyzes the glutathione dependent oxygenation of dichloroacetic acid to glyoxylic acid in vitro. Has no glutathione thioltransferase activity with 4-hydroxynonenal (4-HNE), adrenochrome, phenethyl isothiocyanate (PEITC), 5-hydroperoxyeicosatetraenoic acid ((5S)-HpETE), prostaglandin A2 (PGA2) or 2-hydroxyethyldisulfide (HED). The sequence is that of Probable maleylacetoacetate isomerase 2 (GstZ2) from Drosophila melanogaster (Fruit fly).